Reading from the N-terminus, the 243-residue chain is Glutathione S-transferase U14 (243 aa).

The GST N-terminal domain occupies 5-87 (DTVKLIGCSD…YLDEAWPSDP (83 aa)). Residues 15–16 (DP), 44–45 (EK), 58–59 (KT), and 71–72 (ES) each bind glutathione. The GST C-terminal domain maps to 93-220 (NAYDRASARF…MPTVEEVTEL (128 aa)). Thr159 is subject to Phosphothreonine.

Belongs to the GST superfamily. Tau family.

The protein resides in the cytoplasm. The protein localises to the cytosol. It catalyses the reaction RX + glutathione = an S-substituted glutathione + a halide anion + H(+). Its function is as follows. May be involved in the conjugation of reduced glutathione to a wide number of exogenous and endogenous hydrophobic electrophiles and have a detoxification role against certain herbicides. This is Glutathione S-transferase U14 (GSTU14) from Arabidopsis thaliana (Mouse-ear cress).